A 58-amino-acid chain; its full sequence is U11-myrmicitoxin-Tb1a (58 aa).

A propeptide spanning residues 1–24 (LAMAMGDAVADAQARAMAAAYAIA) is cleaved from the precursor. Cys-34 and Cys-57 are disulfide-bonded.

This sequence belongs to the formicidae venom precursor-01 superfamily. As to expression, expressed by the venom gland.

It is found in the secreted. The protein resides in the target cell membrane. In terms of biological role, neurotoxin that causes irreversible rapid flaccid paralysis in blowflies and honeybees upon intrathoracic injection. Causes a quick and irreversible cytolytic effect (at 10 uM) indicating it possibly acts as a pore-forming peptide. Shows only weak effect on aphids (A.pisum) at high doses 24 hours post intrathoracic injection. In vitro, is not cytotoxic on the dipteran S2 Drosophila embryonic cell line. In Tetramorium bicarinatum (Tramp ant), this protein is U11-myrmicitoxin-Tb1a.